Here is a 179-residue protein sequence, read N- to C-terminus: Ferric nitrobindin-like protein (179 aa).

The GXWXGXG signature appears at 17-23 (GRWEGLG).

The protein belongs to the nitrobindin family.

This Thermobifida fusca (strain YX) protein is Ferric nitrobindin-like protein.